We begin with the raw amino-acid sequence, 314 residues long: Ketimine reductase mu-crystallin (314 aa).

Residue Arg47 coordinates 3,3',5-triiodo-L-thyronine. Residues Ser91, His92, Arg119, Ala144, Val146, Gln147, Asn168, Arg169, Thr170, Asn173, Thr205, Met206, and Val226 each coordinate NADPH. Glu257 contributes to the 3,3',5-triiodo-L-thyronine binding site. Ser292 contributes to the NADPH binding site.

Belongs to the ornithine cyclodeaminase/mu-crystallin family. Homodimer. Binds the thyroid hormone triiodothyronine (T3); T3 binding inhibits enzymatic activity. As to expression, expressed at high abundance in lens, but outside the lens it is preferentially expressed in neural tissues, retina and brain.

Its subcellular location is the cytoplasm. It carries out the reaction L-pipecolate + NADP(+) = Delta(1)-piperideine-2-carboxylate + NADPH + H(+). It catalyses the reaction L-pipecolate + NAD(+) = Delta(1)-piperideine-2-carboxylate + NADH + H(+). The catalysed reaction is L-proline + NADP(+) = 1-pyrroline-2-carboxylate + NADPH + H(+). The enzyme catalyses L-proline + NAD(+) = 1-pyrroline-2-carboxylate + NADH + H(+). It carries out the reaction (3R)-1,4-thiomorpholine-3-carboxylate + NAD(+) = 3,4-dehydrothiomorpholine-3-carboxylate + NADH + 2 H(+). It catalyses the reaction (3R)-1,4-thiomorpholine-3-carboxylate + NADP(+) = 3,4-dehydrothiomorpholine-3-carboxylate + NADPH + 2 H(+). The catalysed reaction is (S)-cystathionine ketimine + NADH + 2 H(+) = (3R,5S)-2,3,5,6,7-pentahydro-1,4-thiazepine-3,5-dicarboxylate + NAD(+). The enzyme catalyses (S)-cystathionine ketimine + NADPH + 2 H(+) = (3R,5S)-2,3,5,6,7-pentahydro-1,4-thiazepine-3,5-dicarboxylate + NADP(+). It carries out the reaction (R)-lanthionine ketimine + NADPH + 2 H(+) = (3R,5R)-1,4-thiomorpholine-3,5-dicarboxylate + NADP(+). It catalyses the reaction Delta(2)-thiazoline-2-carboxylate + NADPH + 2 H(+) = L-thiazolidine-2-carboxylate + NADP(+). Its function is as follows. Catalyzes the NAD(P)H-dependent reduction of imine double bonds of a number of cyclic ketimine substrates, including sulfur-containing cyclic ketimines. Under physiological conditions, it efficiently catalyzes delta(1)-piperideine-2-carboxylate (P2C) and delta(1)-pyrroline-2-carboxylate (Pyr2C) reduction, suggesting a central role in lysine and glutamate metabolism. Additional substrates are delta(2)-thiazoline-2-carboxylate (T2C), 3,4-dehydrothiomorpholine-3-carboxylate (AECK), and (R)-lanthionine ketimine (LK) that is reduced at very low rate compared to other substrates. Also catalyzes the NAD(P)H-dependent reduction of (S)-cystathionine ketimine (CysK). This chain is Ketimine reductase mu-crystallin (CRYM), found in Macropus fuliginosus (Western gray kangaroo).